Consider the following 370-residue polypeptide: Sphingosine 1-phosphate receptor 2 (370 aa).

Over 1-57 (MTTCRLFAGFCQAVTMSKYSQYFNKTLIQVHYLTAKEMTAEELRDRIESKQSLSSLN) the chain is Extracellular. An N-linked (GlcNAc...) asparagine glycan is attached at Asn24. A helical membrane pass occupies residues 58–78 (ILFVVICSIIILENLLVLIAV). The Cytoplasmic segment spans residues 79-87 (FRNKKFHSA). The helical transmembrane segment at 88–108 (MFFFIGNLAFSDLLAGSAYIA) threads the bilayer. At 109–128 (NIFLSGPRTFHLTPVQWFIR) the chain is on the extracellular side. A helical membrane pass occupies residues 129 to 149 (EGTAFIALSASVFSLLAIAIE). Over 150-167 (RYIAITKVKVYGSNKTCR) the chain is Cytoplasmic. Residues 168–193 (MFLLIGACWVMSILLGGLPIIGWNCI) form a helical membrane-spanning segment. Over 194–219 (NNLDDCSAVLPLNTRYYIRFVVTIFS) the chain is Extracellular. A helical transmembrane segment spans residues 220–230 (IILLSIVILYV). Residues 231–254 (RIYLIVRTSHQEATNSPAYALLKT) are Cytoplasmic-facing. Residues 255-275 (VTIVLGVFIICWLPAFTILLL) form a helical membrane-spanning segment. The Extracellular segment spans residues 276 to 289 (DTSCKMKQCPILNN). Residues 290–310 (AGIFFSFATLNSALNPLIYTL) traverse the membrane as a helical segment. At 311-370 (RSKDMRKEFLRVLCCWGLLNCGRPPHRCMVPLKSSSSMEHCTNKHEHQSIPIMQDCTTCV) the chain is on the cytoplasmic side. Residue Cys325 is the site of S-palmitoyl cysteine attachment.

It belongs to the G-protein coupled receptor 1 family.

It is found in the cell membrane. Receptor for the lysosphingolipid sphingosine 1-phosphate (S1P). S1P receptor is critical for cell migration and epithelial integrity during vertebrate embryogenesis. Receptor for the chemokine-like protein FAM19A5. Mediates the inhibitory effect of FAM19A5 on vascular smooth muscle cell proliferation and migration. This Danio rerio (Zebrafish) protein is Sphingosine 1-phosphate receptor 2 (s1pr2).